A 77-amino-acid chain; its full sequence is uncharacterized protein (77 aa).

This is an uncharacterized protein from Escherichia coli (strain K12).